Reading from the N-terminus, the 159-residue chain is Ribosomal RNA large subunit methyltransferase H (159 aa).

S-adenosyl-L-methionine is bound by residues L76, G107, and 126 to 131 (LSSLTL).

It belongs to the RNA methyltransferase RlmH family. In terms of assembly, homodimer.

The protein localises to the cytoplasm. The enzyme catalyses pseudouridine(1915) in 23S rRNA + S-adenosyl-L-methionine = N(3)-methylpseudouridine(1915) in 23S rRNA + S-adenosyl-L-homocysteine + H(+). In terms of biological role, specifically methylates the pseudouridine at position 1915 (m3Psi1915) in 23S rRNA. The protein is Ribosomal RNA large subunit methyltransferase H of Cupriavidus pinatubonensis (strain JMP 134 / LMG 1197) (Cupriavidus necator (strain JMP 134)).